We begin with the raw amino-acid sequence, 325 residues long: Cytochrome c1, heme protein, mitochondrial (325 aa).

The N-terminal 84 residues, 1–84 (MAAAAASLRG…AMALHSAVSA (84 aa)), are a transit peptide targeting the mitochondrion. Over 85–281 (SDLELHPPSY…TFLRWASEPE (197 aa)) the chain is Mitochondrial intermembrane. Positions 108-209 (TSIRRGFQVY…IVRARHGGED (102 aa)) constitute a Cytochrome c domain. 3 residues coordinate heme c: cysteine 121, cysteine 124, and histidine 125. Serine 182 carries the phosphoserine modification. A heme c-binding site is contributed by methionine 244. A helical transmembrane segment spans residues 282–315 (HDHRKRMGLKMLMMMALLVPLVYTIKRHKWSVLK). The Mitochondrial matrix portion of the chain corresponds to 316-325 (SRKLAYRPPK).

This sequence belongs to the cytochrome c family. Component of the ubiquinol-cytochrome c oxidoreductase (cytochrome b-c1 complex, complex III, CIII), a multisubunit enzyme composed of 11 subunits. The complex is composed of 3 respiratory subunits cytochrome b, cytochrome c1 and Rieske protein UQCRFS1, 2 core protein subunits UQCRC1/QCR1 and UQCRC2/QCR2, and 6 low-molecular weight protein subunits UQCRH/QCR6, UQCRB/QCR7, UQCRQ/QCR8, UQCR10/QCR9, UQCR11/QCR10 and subunit 9, the cleavage product of Rieske protein UQCRFS1. The complex exists as an obligatory dimer and forms supercomplexes (SCs) in the inner mitochondrial membrane with NADH-ubiquinone oxidoreductase (complex I, CI) and cytochrome c oxidase (complex IV, CIV), resulting in different assemblies (supercomplex SCI(1)III(2)IV(1) and megacomplex MCI(2)III(2)IV(2)). Interacts with FLVCR2; this interaction occurs in the absence of heme and is disrupted upon heme binding. Heme c serves as cofactor.

It is found in the mitochondrion inner membrane. The enzyme catalyses a quinol + 2 Fe(III)-[cytochrome c](out) = a quinone + 2 Fe(II)-[cytochrome c](out) + 2 H(+)(out). In terms of biological role, component of the ubiquinol-cytochrome c oxidoreductase, a multisubunit transmembrane complex that is part of the mitochondrial electron transport chain which drives oxidative phosphorylation. The respiratory chain contains 3 multisubunit complexes succinate dehydrogenase (complex II, CII), ubiquinol-cytochrome c oxidoreductase (cytochrome b-c1 complex, complex III, CIII) and cytochrome c oxidase (complex IV, CIV), that cooperate to transfer electrons derived from NADH and succinate to molecular oxygen, creating an electrochemical gradient over the inner membrane that drives transmembrane transport and the ATP synthase. The cytochrome b-c1 complex catalyzes electron transfer from ubiquinol to cytochrome c, linking this redox reaction to translocation of protons across the mitochondrial inner membrane, with protons being carried across the membrane as hydrogens on the quinol. In the process called Q cycle, 2 protons are consumed from the matrix, 4 protons are released into the intermembrane space and 2 electrons are passed to cytochrome c. Cytochrome c1 is a catalytic core subunit containing a c-type heme. It transfers electrons from the [2Fe-2S] iron-sulfur cluster of the Rieske protein to cytochrome c. This is Cytochrome c1, heme protein, mitochondrial (CYC1) from Homo sapiens (Human).